A 673-amino-acid polypeptide reads, in one-letter code: MSKQGKPFILHSPFKPSGDQPSAIAKLTEGLNDGLAHQTLLGVTGSGKTFTIANVIAQLNRPAMLLAPNKTLAAQLYAEMKAFFPENAVEYFVSYYDYYQPEAYVPSSDTFIEKDASINEQIEQMRLSATKSFLERRDTIVVASVSAIYGLGDVDAYMQMMLHLQLGAIIDQREILARLAELQYTRNDQAFQRSTFRVRGEVIDIFPAESDEIALRVELFDDEIESLSLFDPLTGHSLGKVPRYTIYPKTHYVTPRERILNAIEEIKQELVERREYFIKENKLLEEQRITQRTQFDIEMMNELGYCSGIENYSRYLSGRKEGEPPPTLFDYMPADGLLIIDESHVTVPQIGGMYRGDRARKETLVQYGFRLPSALDNRPLRFEEFERLAPQTIYVSATPGNYELEKSNGDVVDQVVRPTGLLDPIIEVRPVATQVDDVLSEIHKRVAVDERVLITTLTKKMAEDLTDYLDEHGVRVRYLHSDIDTVERVEIIHDLRMGMFDVLVGINLLREGLDMPEVSLVAILDADKEGFLRSERSLIQTIGRAARNLNGKAILYGDRITNSMQKAITETERRREKQQKYNEEHGITPQALNKKVGELLDIGQTDKPKRGKQAVKVEEKSANTYKPKSRKELEKELKQLEQQMRDFAKDLEFEKAAAVRDKIGQLKAVLLEV.

In terms of domain architecture, Helicase ATP-binding spans 29–188; the sequence is EGLNDGLAHQ…LAELQYTRND (160 aa). An ATP-binding site is contributed by 42–49; that stretch reads GVTGSGKT. A Beta-hairpin motif is present at residues 95–118; that stretch reads YYDYYQPEAYVPSSDTFIEKDASI. One can recognise a Helicase C-terminal domain in the interval 434-600; the sequence is QVDDVLSEIH…ALNKKVGELL (167 aa). The interval 607–632 is disordered; sequence KPKRGKQAVKVEEKSANTYKPKSRKE. The UVR domain occupies 634-669; it reads EKELKQLEQQMRDFAKDLEFEKAAAVRDKIGQLKAV.

This sequence belongs to the UvrB family. Forms a heterotetramer with UvrA during the search for lesions. Interacts with UvrC in an incision complex.

The protein localises to the cytoplasm. The UvrABC repair system catalyzes the recognition and processing of DNA lesions. A damage recognition complex composed of 2 UvrA and 2 UvrB subunits scans DNA for abnormalities. Upon binding of the UvrA(2)B(2) complex to a putative damaged site, the DNA wraps around one UvrB monomer. DNA wrap is dependent on ATP binding by UvrB and probably causes local melting of the DNA helix, facilitating insertion of UvrB beta-hairpin between the DNA strands. Then UvrB probes one DNA strand for the presence of a lesion. If a lesion is found the UvrA subunits dissociate and the UvrB-DNA preincision complex is formed. This complex is subsequently bound by UvrC and the second UvrB is released. If no lesion is found, the DNA wraps around the other UvrB subunit that will check the other stand for damage. The chain is UvrABC system protein B from Actinobacillus pleuropneumoniae serotype 5b (strain L20).